Reading from the N-terminus, the 168-residue chain is uncharacterized protein (168 aa).

5 helical membrane-spanning segments follow: residues 15–33, 41–57, 73–93, 108–128, and 129–149; these read YLTVIIYRTGFVIAALAVL, LSLTFILIAATCCASSL, WIGLLFYINHYPALALGGALL, VPLLNLQPIFVACLWFSWVLN, and NLIALRIFSIISGVLLLVLAI.

It localises to the cell membrane. This is an uncharacterized protein from Haemophilus influenzae (strain ATCC 51907 / DSM 11121 / KW20 / Rd).